A 322-amino-acid chain; its full sequence is Protein lin-56 (322 aa).

The disordered stretch occupies residues 264–322 (SSQKLQQNGFPEKVEQMDKYSNKLKDEASDKKYEKPGKKDYVEEEGYWAPITDSEDDEA). Basic and acidic residues predominate over residues 275 to 304 (EKVEQMDKYSNKLKDEASDKKYEKPGKKDY).

As to expression, widely expressed throughout embryonic development. Expressed in the six multipotent ventral ectodermal blast cells, P3.p-P8.p, which generate the vulva and in their descendants throughout vulval development.

Its subcellular location is the nucleus. Functionally, required for translation, stability and/or localization of lin-15a. This chain is Protein lin-56 (lin-56), found in Caenorhabditis elegans.